We begin with the raw amino-acid sequence, 76 residues long: Omega/kappa-hexatoxin-Ar1g (76 aa).

An N-terminal signal peptide occupies residues 1–22 (MNTATGFIVLLVLATVLGGIEA). The propeptide occupies 23–35 (GESHMRKDAMGRV). Intrachain disulfides connect Cys-40-Cys-55, Cys-47-Cys-60, and Cys-54-Cys-74.

Belongs to the neurotoxin 08 (Shiva) family. 02 (omega/kappa toxin) subfamily. As to expression, expressed by the venom gland.

It is found in the secreted. Functionally, toxin that may inhibit ion channels. The chain is Omega/kappa-hexatoxin-Ar1g from Atrax robustus (Sydney funnel-web spider).